Reading from the N-terminus, the 196-residue chain is Probable phosphoheptose isomerase (196 aa).

An SIS domain is found at 43 to 196 (IVNVFNSGGK…MICSVIDSYY (154 aa)). 58-60 (NGG) contacts substrate. 2 residues coordinate Zn(2+): His-67 and Glu-71. Residues Glu-71, 100–101 (ND), 126–128 (STS), Ser-131, and Gln-178 contribute to the substrate site. Zn(2+) contacts are provided by Gln-178 and His-186.

This sequence belongs to the SIS family. GmhA subfamily. Zn(2+) is required as a cofactor.

The protein localises to the cytoplasm. It catalyses the reaction 2 D-sedoheptulose 7-phosphate = D-glycero-alpha-D-manno-heptose 7-phosphate + D-glycero-beta-D-manno-heptose 7-phosphate. Its pathway is carbohydrate biosynthesis; D-glycero-D-manno-heptose 7-phosphate biosynthesis; D-glycero-alpha-D-manno-heptose 7-phosphate and D-glycero-beta-D-manno-heptose 7-phosphate from sedoheptulose 7-phosphate: step 1/1. In terms of biological role, catalyzes the isomerization of sedoheptulose 7-phosphate in D-glycero-D-manno-heptose 7-phosphate. This is Probable phosphoheptose isomerase from Thermoplasma volcanium (strain ATCC 51530 / DSM 4299 / JCM 9571 / NBRC 15438 / GSS1).